Reading from the N-terminus, the 447-residue chain is Na(+)-translocating NADH-quinone reductase subunit A (447 aa).

Belongs to the NqrA family. In terms of assembly, composed of six subunits; NqrA, NqrB, NqrC, NqrD, NqrE and NqrF.

It catalyses the reaction a ubiquinone + n Na(+)(in) + NADH + H(+) = a ubiquinol + n Na(+)(out) + NAD(+). NQR complex catalyzes the reduction of ubiquinone-1 to ubiquinol by two successive reactions, coupled with the transport of Na(+) ions from the cytoplasm to the periplasm. NqrA to NqrE are probably involved in the second step, the conversion of ubisemiquinone to ubiquinol. The protein is Na(+)-translocating NADH-quinone reductase subunit A of Haemophilus influenzae (strain PittGG).